The primary structure comprises 1064 residues: MRRRYSHDPPGSFRETKVFGFRGEYGCKALVDLLAGKGSQLLQVRDKMPDSPLGSQSNESRIPKHSEALLSRVGNDPELGSPSHRLASLMLVEGLTDLQLKEHDFTQVEATRGVWHPARVITLDRLFLPLSRVSIPPRVSLTIGVAGVGKTTLVRHFVHCWARGQVGKGFSRVLPLTFRDLNTYEKLSADRLIQSIFSSIGEASLVATAPDRVLLVLDGLDECKTPLEFSNTMACSDPKKEIQVDHLITNIIRGNLFPEISVWITSRPSAAGQIPGGLVDRMTEIRGLTEEEIKVCLEQMFPEEQNLLGQVLSQVQANRALYLMCTVPAFCRLTGLALGHLYRTRLAVQDIELPLPQTLCELYSWYFRMALGGEGQDKEKVSPRIKQVTQGARKMVGTLGRLAFHGLVKKKYVFYEQDMKAFGVDLALLQNTLCSCLLQREETLASSVAYCFIHLSLQEFVAATYYYSASKRAIFDLFTESGMSWPRLGFLAHFRCAAQRATQAKDGRLDVFLRFLSGLLSPRVNTLLAGSLLSQGEHQSYRDQVAEVLQGFLHPDAAVCARAINVLYCLSELRHTELACSVEEAMRSGTLAGMTSPSHRTALAYLLQMSDICSPEADFSLCLSQHVLQSLLPQLLYCQSLRLDNNQFQDPVMELLGSVLSGKDCRIRKISLAENQIGNKGAKALARSLLVNRSLITLDLRSNSIGPPGAKALADALKINRTLTSLSLQSNVIKDDGVMCVAEALVSNQTISMLQLQKNLIGLIGAQQMADALKQNRSLKALMFSSNTIGDRGAIALAEALKVNQILENLDLQSNSISDMGVTVLMRALCSNQTLSSLNLRENSISPEGAQALTQALCRNNTLKHLDLTANLLHDRGAQAIAVAVGENHSLTHLHLQWNFIQAGAARALGQALQLNRTLTTLDLQENAIGDEGASSVAGALKVNTTLIALYLQVASIGSQGAQALGEALTVNRTLEILDLRGNDVGAAGAKALANALKLNSSLRRLNLQENSLGMDGAIFVASALSENHGLHHINLQGNPIGESAARMISEAIKTNAPTCTVEI.

Residues 138–459 form the NACHT domain; sequence RVSLTIGVAG…YCFIHLSLQE (322 aa). ATP is bound at residue 144–151; sequence GVAGVGKT. LRR repeat units lie at residues 338–362, 570–593, 632–662, 664–687, 692–715, 720–743, 748–771, 776–799, 804–827, 832–855, 860–883, 888–911, 916–939, 972–995, 1000–1022, and 1028–1051; these read LGHL…LCEL, LSEL…TLAG, LPQL…VLSG, DCRI…ALAR, NRSL…ALAD, NRTL…CVAE, NQTI…QMAD, NRSL…ALAE, NQIL…VLMR, NQTL…ALTQ, NNTL…AIAV, NHSL…ALGQ, NRTL…SVAG, NRTL…ALAN, NSSL…IFVA, and NHGL…MISE.

The protein belongs to the NLRP family. In terms of assembly, directly interacts (via CARD) with TMEM173/STING; this interaction reduces TMEM173 trafficking to the perinuclear region in response to interferon stimulatory DNA. Also interacts, but to a lesser extent, with TBK1. Interacts with TRAF6; this interaction results in decreased TRAF6 'Lys-63'-linked polyubiquitination, but leaves 'Lys-48'-linked chains unchanged, promoting TRAF6 protein degradation. Interacts with PIK3R1/PIK3R2; this interaction disrupts the association between PIK3R1/PIK3R2 and the p110 catalytic subunit PIK3CA/PIK3CB/PIK3CD and reduces PIK3R1/PIK3R2 activation. Weakly interacts with PYCARD/ASC. Interacts with CASP1 and CASP5. In terms of tissue distribution, expressed in bone marrow-derived macrophages.

The protein localises to the cytoplasm. Functionally, negative regulator of the innate immune response. Attenuates signaling pathways activated by Toll-like receptors (TLRs) and the DNA sensor STING/TMEM173 in response to pathogen-associated molecular patterns, such as intracellular poly(dA:dT), but not poly(I:C), or in response to DNA virus infection, including that of Herpes simplex virus 1 (HSV1). May affect TLR4 signaling by acting at the level of TRAF6 ubiquitination, decreasing the activating 'Lys-63'-linked ubiquitination and leaving unchanged the degradative 'Lys-48'-linked ubiquitination. Inhibits the PI3K-AKT-mTOR pathway possibly by directly interacting with the posphatidylinositol 3-kinase regulatory subunit p85 (PIK3R1/PIK3R2) and disrupting the association between PIK3R1/PIK3R2 and the catalytic subunit p110 (PIK3CA/PIK3CB/PIK3CD) and reducing PIK3R1/PIK3R2 activation. Via its regulation of the PI3K-AKT-mTOR pathway, controls cell proliferation, predominantly in intestinal epithelial cells. May also affect NOD1- or NOD2-mediated NF-kappa-B activation. Might also affect the inflammatory response by preventing NLRP3 inflammasome formation, CASP1 cleavage and IL1B maturation. The sequence is that of Protein NLRC3 (Nlrc3) from Mus musculus (Mouse).